A 269-amino-acid chain; its full sequence is Peptide deformylase 1B, chloroplastic (269 aa).

The transit peptide at methionine 1 to phenylalanine 51 directs the protein to the chloroplast. The Fe cation site is built by cysteine 168 and histidine 210. Residue glutamate 211 is part of the active site. Histidine 214 lines the Fe cation pocket.

Belongs to the polypeptide deformylase family. As to quaternary structure, homodimer. Fe(2+) serves as cofactor. In terms of tissue distribution, mainly expressed in mature leaves and sheaths.

The protein localises to the plastid. The protein resides in the chloroplast stroma. Its subcellular location is the mitochondrion. It catalyses the reaction N-terminal N-formyl-L-methionyl-[peptide] + H2O = N-terminal L-methionyl-[peptide] + formate. Its activity is regulated as follows. Inhibited by actinonin. Its function is as follows. Removes the formyl group from the N-terminal Met of newly synthesized proteins. This chain is Peptide deformylase 1B, chloroplastic (PDF1B), found in Oryza sativa subsp. japonica (Rice).